A 119-amino-acid polypeptide reads, in one-letter code: Auxin-responsive protein SAUR78 (119 aa).

The protein belongs to the ARG7 family.

May be involved in the regulation of ethylene receptor signaling. Promotes cell expansion and plant growth. The chain is Auxin-responsive protein SAUR78 from Arabidopsis thaliana (Mouse-ear cress).